A 211-amino-acid polypeptide reads, in one-letter code: Interleukin-6 (211 aa).

The N-terminal stretch at 1–29 (MNSLSTSAFSPVAFSLGLLLVMATAFPTP) is a signal peptide. Cysteines 71 and 77 form a disulfide. Residue Ser-80 is modified to Phosphoserine. The cysteines at positions 100 and 110 are disulfide-linked.

It belongs to the IL-6 superfamily. In terms of assembly, component of a hexamer of two molecules each of IL6, IL6R and IL6ST; first binds to IL6R to associate with the signaling subunit IL6ST. Interacts with IL6R (via the N-terminal ectodomain); this interaction may be affected by IL6R-binding with SORL1, hence decreasing IL6 cis signaling. Interacts with SORL1 (via the N-terminal ectodomain); this interaction leads to IL6 internalization and lysosomal degradation. May form a trimeric complex with the soluble SORL1 ectodomain and soluble IL6R receptor; this interaction might stabilize circulating IL6, hence promoting IL6 trans signaling.

It localises to the secreted. Cytokine with a wide variety of biological functions in immunity, tissue regeneration, and metabolism. Binds to IL6R, then the complex associates to the signaling subunit IL6ST/gp130 to trigger the intracellular IL6-signaling pathway. The interaction with the membrane-bound IL6R and IL6ST stimulates 'classic signaling', whereas the binding of IL6 and soluble IL6R to IL6ST stimulates 'trans-signaling'. Alternatively, 'cluster signaling' occurs when membrane-bound IL6:IL6R complexes on transmitter cells activate IL6ST receptors on neighboring receiver cells. Functionally, IL6 is a potent inducer of the acute phase response. Rapid production of IL6 contributes to host defense during infection and tissue injury, but excessive IL6 synthesis is involved in disease pathology. In the innate immune response, is synthesized by myeloid cells, such as macrophages and dendritic cells, upon recognition of pathogens through toll-like receptors (TLRs) at the site of infection or tissue injury. In the adaptive immune response, is required for the differentiation of B cells into immunoglobulin-secreting cells. Plays a major role in the differentiation of CD4(+) T cell subsets. Essential factor for the development of T follicular helper (Tfh) cells that are required for the induction of germinal-center formation. Required to drive naive CD4(+) T cells to the Th17 lineage. Also required for proliferation of myeloma cells and the survival of plasmablast cells. Its function is as follows. Acts as an essential factor in bone homeostasis and on vessels directly or indirectly by induction of VEGF, resulting in increased angiogenesis activity and vascular permeability. Induces, through 'trans-signaling' and synergistically with IL1B and TNF, the production of VEGF. Involved in metabolic controls, is discharged into the bloodstream after muscle contraction increasing lipolysis and improving insulin resistance. 'Trans-signaling' in central nervous system also regulates energy and glucose homeostasis. Mediates, through GLP-1, crosstalk between insulin-sensitive tissues, intestinal L cells and pancreatic islets to adapt to changes in insulin demand. Also acts as a myokine. Plays a protective role during liver injury, being required for maintenance of tissue regeneration. Also has a pivotal role in iron metabolism by regulating HAMP/hepcidin expression upon inflammation or bacterial infection. Through activation of IL6ST-YAP-NOTCH pathway, induces inflammation-induced epithelial regeneration. The polypeptide is Interleukin-6 (IL6) (Camelus bactrianus (Bactrian camel)).